Consider the following 119-residue polypeptide: Ribonuclease P protein component (119 aa).

This sequence belongs to the RnpA family. Consists of a catalytic RNA component (M1 or rnpB) and a protein subunit.

It catalyses the reaction Endonucleolytic cleavage of RNA, removing 5'-extranucleotides from tRNA precursor.. In terms of biological role, RNaseP catalyzes the removal of the 5'-leader sequence from pre-tRNA to produce the mature 5'-terminus. It can also cleave other RNA substrates such as 4.5S RNA. The protein component plays an auxiliary but essential role in vivo by binding to the 5'-leader sequence and broadening the substrate specificity of the ribozyme. This chain is Ribonuclease P protein component, found in Syntrophomonas wolfei subsp. wolfei (strain DSM 2245B / Goettingen).